The sequence spans 314 residues: NF-kappa-B inhibitor alpha (314 aa).

Residues M1–E41 are disordered. Basic and acidic residues predominate over residues G15 to E41. K21 is covalently cross-linked (Glycyl lysine isopeptide (Lys-Gly) (interchain with G-Cter in SUMO); alternate). Residue K21 forms a Glycyl lysine isopeptide (Lys-Gly) (interchain with G-Cter in ubiquitin); alternate linkage. K22 participates in a covalent cross-link: Glycyl lysine isopeptide (Lys-Gly) (interchain with G-Cter in ubiquitin). The short motif at H30 to S36 is the Destruction motif element. S32 carries the phosphoserine; by IKKA and IKKB modification. S36 is modified (phosphoserine; by IKKA, IKKB, IKKE and TBK1). Y42 is subject to Phosphotyrosine; by Tyr-kinases. The short motif at M45 to L54 is the Nuclear export signal element. Positions L110–I120 match the Nuclear import signal motif. ANK repeat units lie at residues L110 to L139, R143 to L172, N182 to A211, and N216 to R245. 2 positions are modified to (3S)-3-hydroxyasparagine; by HIF1AN: N210 and N244. 2 positions are modified to phosphoserine; by CK2: S283 and S288. T291 carries the phosphothreonine; by CK2 modification. At S293 the chain carries Phosphoserine; by CK2. T296 is subject to Phosphothreonine.

It belongs to the NF-kappa-B inhibitor family. As to quaternary structure, interacts with RELA; the interaction requires the nuclear import signal. Part of a 70-90 kDa complex at least consisting of CHUK, IKBKB, NFKBIA, RELA, ELP1 and MAP3K14. Interacts with NKIRAS1 and NKIRAS2. Interacts with RWDD3; the interaction enhances sumoylation. Interacts with PRMT2. Interacts with PRKACA in platelets; this interaction is disrupted by thrombin and collagen. Interacts with MEFV. Interacts with DDRGK1; positively regulates NFKBIA phosphorylation and degradation. Interacts with HNRNPA2B1; the interaction may be mediated by the RRM2 domain of HNRNPA2B1, and HNRNPA2B1 may interact simultaneously with FAM76B and either NFKBIA or NFKBIE to form a complex. Post-translationally, phosphorylated at Ser-32 and Ser-36 by IKKA/CHUK and IKKB/IKBKB; disables inhibition of NF-kappa-B DNA-binding activity. Phosphorylation at positions 32 and 36 is prerequisite to recognition by the SCF(FBXW11) and SCF(BTRC) complexes, leading to polyubiquitination and subsequent degradation. Polyubiquitinated at Lys-21 and/or Lys-22 following phosphorylation at Ser-32 and Ser-36. Monoubiquitinated at Lys-21 and/or Lys-22 by UBE2D3. Ubiquitin chain elongation is then performed by CDC34 in cooperation with the SCF(FBXW11) E3 ligase complex, building ubiquitin chains from the UBE2D3-primed NFKBIA-linked ubiquitin. The resulting polyubiquitination leads to protein degradation. Also ubiquitinated by the SCF(BTRC) complex following stimulus-dependent phosphorylation at Ser-32 and Ser-36. Deubiquitinated by USP38, leading to NF-kappa-B inhibition. In terms of processing, sumoylated; sumoylation requires the presence of the nuclear import signal. Sumoylation blocks ubiquitination and proteasome-mediated degradation of the protein thereby increasing the protein stability. Post-translationally, hydroxylated by HIF1AN.

It is found in the cytoplasm. The protein resides in the nucleus. In terms of biological role, inhibits the activity of dimeric NF-kappa-B/REL complexes by trapping REL (RELA/p65 and NFKB1/p50) dimers in the cytoplasm by masking their nuclear localization signals. On cellular stimulation by immune and pro-inflammatory responses, becomes phosphorylated promoting ubiquitination and degradation, enabling the dimeric RELA to translocate to the nucleus and activate transcription. The polypeptide is NF-kappa-B inhibitor alpha (NFKBIA) (Sus scrofa (Pig)).